The primary structure comprises 81 residues: Large ribosomal subunit protein bL31B (81 aa).

Belongs to the bacterial ribosomal protein bL31 family. Type B subfamily. As to quaternary structure, part of the 50S ribosomal subunit.

The protein is Large ribosomal subunit protein bL31B of Cutibacterium acnes (strain DSM 16379 / KPA171202) (Propionibacterium acnes).